Here is a 600-residue protein sequence, read N- to C-terminus: Oligopeptide-binding protein OppA (600 aa).

The first 22 residues, 1-22, serve as a signal peptide directing secretion; it reads MNKLKVTLLASSVVLAATLLSA. Cysteine 23 carries the N-palmitoyl cysteine lipid modification. A lipid anchor (S-diacylglycerol cysteine) is attached at cysteine 23.

The protein belongs to the bacterial solute-binding protein 5 family. In terms of assembly, the complex is composed of two ATP-binding proteins (OppD and OppF), two transmembrane proteins (OppB and OppC) and a solute-binding protein (OppA).

The protein localises to the cell membrane. Its function is as follows. Part of the ABC transporter complex OppABCDF involved in the uptake of oligopeptides. The chain is Oligopeptide-binding protein OppA from Lactococcus lactis subsp. cremoris (strain SK11).